We begin with the raw amino-acid sequence, 395 residues long: FAD-dependent urate hydroxylase (395 aa).

FAD is bound by residues G11, 30–31, S43, and M125; that span reads ER. Substrate is bound by residues N180, R206, and 218-220; that span reads YFF. FAD-binding positions include D287 and 297-301; that span reads GQGGC.

It belongs to the FAD-dependent urate hydroxylase family. As to quaternary structure, monomer. It depends on FAD as a cofactor.

It carries out the reaction urate + NADH + O2 + H(+) = 5-hydroxyisourate + NAD(+) + H2O. It participates in purine metabolism; urate degradation. Catalyzes the hydroxylation of urate to 5-hydroxyisourate (HIU). Is likely to be involved in the urate degradation pathway to allantoin. Prefers NADH over NADPH as the electron donor. The chain is FAD-dependent urate hydroxylase from Mycolicibacterium vanbaalenii (strain DSM 7251 / JCM 13017 / BCRC 16820 / KCTC 9966 / NRRL B-24157 / PYR-1) (Mycobacterium vanbaalenii).